Reading from the N-terminus, the 1732-residue chain is Transient receptor potential cation channel subfamily M member 3 (1732 aa).

Over 1–894 (MPEPWGTVYF…RKIYEFYNAP (894 aa)) the chain is Cytoplasmic. Calmodulin-binding stretches follow at residues 192 to 215 (NFEL…MTTG), 300 to 323 (TGKY…QKIN), 601 to 624 (RKRF…KLLG), and 793 to 816 (RKNS…LEFK). Residues 617-625 (PKALKLLGM) form a required for the inhibitory action of G-beta/gamma-subunits of heterotrimeric G-proteins region. Serine 796 lines the 1,2-dioctanoyl-sn-glycero-3-phospho-(1D-myo-inositol-4,5-bisphosphate) pocket. Residues 895 to 918 (IVKFWFYTLAYIGYLMLFNYIVLV) form a helical membrane-spanning segment. The Extracellular portion of the chain corresponds to 919-925 (KMERWPS). Residues 926–948 (TQEWIVISYIFTLGIEKMREILM) form a helical membrane-spanning segment. At 949 to 964 (SEPGKLLQKVKVWLQE) the chain is on the cytoplasmic side. The chain crosses the membrane as a helical span at residues 965 to 985 (YWNVTDLIAILLFSVGMILRL). At 986-989 (QDQP) the chain is on the extracellular side. The helical transmembrane segment at 990-1013 (FRSDGRVIYCVNIIYWYIRLLDIF) threads the bilayer. Residues 1014-1028 (GVNKYLGPYVMMIGK) lie on the Cytoplasmic side of the membrane. 1,2-dioctanoyl-sn-glycero-3-phospho-(1D-myo-inositol-4,5-bisphosphate) contacts are provided by lysine 1017 and tyrosine 1018. A helical transmembrane segment spans residues 1029 to 1056 (MMIDMMYFVIIMLVVLMSFGVARQAILF). The Extracellular segment spans residues 1057 to 1111 (PNEEPSWKLAKNIFYMPYWMIYGEVFADQIDPPCGQNETREDGKIIQLPPCKTGA). A helical transmembrane segment spans residues 1112–1137 (WIVPAIMACYLLVANILLVNLLIAVF). Over 1138–1732 (NNTFFEVKSI…AFQSFESKHN (595 aa)) the chain is Cytoplasmic. Residues 1241–1301 (ERIRVTSERV…LERLTGLERA (61 aa)) are a coiled coil. A compositionally biased stretch (low complexity) spans 1459–1476 (PVPSTAPSSSAYATLAPT). Disordered stretches follow at residues 1459 to 1478 (PVPS…PTDR) and 1611 to 1732 (REAE…SKHN). 3 stretches are compositionally biased toward polar residues: residues 1635 to 1653 (AISS…NNIT), 1690 to 1701 (NTASLRNPFQRS), and 1720 to 1732 (RTSA…SKHN).

This sequence belongs to the transient receptor (TC 1.A.4) family. LTrpC subfamily. TRPM3 sub-subfamily. In terms of assembly, homotetramer. Interacts with TRPM1; the interaction results in the formation of a heteromultimeric cation channel complex that are functionally different from the homomeric channels. Expressed primarily in the kidney and, at lower levels, in brain, testis, ovary, pancreas and spinal cord. Expression in the brain and kidney was determined at protein level. In the kidney, expressed predominantly in the collecting tubular epithelium in the medulla, medullary rays, and periglomerular regions; in the brain, highest levels are found in the cerebellum, choroid plexus, the locus coeruleus, the posterior thalamus and the substantia nigra. Down-regulated in renal tumors compared to normal kidney. Expressed in the lens.

It is found in the cell membrane. It catalyses the reaction Ca(2+)(in) = Ca(2+)(out). It carries out the reaction Mn(2+)(in) = Mn(2+)(out). The enzyme catalyses Zn(2+)(in) = Zn(2+)(out). The catalysed reaction is Mg(2+)(in) = Mg(2+)(out). Its activity is regulated as follows. Activated by the neurosteroid pregnelonone sulfate (PregS); PregS activates the channel by shifting its current-voltage activation curve toward more negative membrane potentials and also potentiates temperature-induced activation. Activated by sphingosine. Activated by heat. Intracellular Ca(2+) inhibits TRPM3 probably via interaction with Ca(2+)/calmodulin. Intracellular Mg(2+) inhibits TRPM3 activity. Both intracellular and extracellular protons block TRPM3 through propable binding sites in the pore region. Positively regulated by phosphoinositide phosphoinositol 4,5-biphosphate (PI(4,5)P2). Strongly inhibited by activation of G(i)-coupled receptors via direct binding with G-betagamma-subunits of heterotrimeric G-proteins. Functionally, constitutively active, non-selective divalent cation-conducting channel that is permeable to Ca(2+), Mn(2+), and Mg(2+), with a high permeability for Ca(2+). However, can be enhanced by increasing temperature and by ligands, including the endogenous neurosteroid pregnenolone sulfate and sphingosine-1 and suppressed by intracellular Mg(2+). Implicated in a variety of cellular processes, including insulin/peptide secretion, vascular constriction and dilation, noxious heat sensing, inflammatory and spontaneous pain sensitivity. In neurons of the dorsal root ganglia, functions as thermosensitive channel for the detection of noxious heat and spontaneous pain. Suggested to function as an ionotropic steroid receptor in beta-cell, indeed pregnenolone sulfate leads to Ca(2+) influx and enhanced insulin secretion. Mediates Zn(2+) uptake into the lumen of pancreatic beta cell secretory granules, thereby regulating insulin secretion. Forms heteromultimeric ion channels with TRPM1 which are permeable for Ca(2+) and Zn(2+) ions. Exists as multiple splice variants which differ significantly in their biophysical properties. This chain is Transient receptor potential cation channel subfamily M member 3, found in Homo sapiens (Human).